The following is a 692-amino-acid chain: Small conductance calcium-activated potassium channel-like protein 3 (692 aa).

Residues 270–290 (SLYLALFGVILMLVESEITAE) form a helical membrane-spanning segment. Residues 313-333 (TIALLYHIILYHLNDIVLELV) form a helical membrane-spanning segment. Residues 349–369 (VIQFCIEFICCGICPLPGSGE) traverse the membrane as a helical segment. Residues 401-421 (VILSCFMLCRSYLFARFMVLH) form a helical membrane-spanning segment. A helical membrane pass occupies residues 455 to 475 (PVLFLTTFTFIFWIIMSWMFV). Positions 492-512 (YSNSLWFIAITFMLNGYGDIV) form an intramembrane region, pore-forming. A helical transmembrane segment spans residues 520-540 (FIAIFVGVVGAVISSILIAVI). The span at 667–683 (HSTPNVPHLQGLTSSPV) shows a compositional bias: polar residues. The disordered stretch occupies residues 667-692 (HSTPNVPHLQGLTSSPVPSDRYDNRF).

This sequence belongs to the potassium channel KCNN family. SK subfamily. In terms of assembly, heterooligomer.

The protein resides in the membrane. Forms a voltage-independent potassium channel activated by intracellular calcium. The polypeptide is Small conductance calcium-activated potassium channel-like protein 3 (kcnl-3) (Caenorhabditis elegans).